The following is a 133-amino-acid chain: Small ribosomal subunit protein uS8 (133 aa).

It belongs to the universal ribosomal protein uS8 family. In terms of assembly, part of the 30S ribosomal subunit. Contacts proteins S5 and S12.

Functionally, one of the primary rRNA binding proteins, it binds directly to 16S rRNA central domain where it helps coordinate assembly of the platform of the 30S subunit. This Chlamydia trachomatis serovar L2b (strain UCH-1/proctitis) protein is Small ribosomal subunit protein uS8.